Reading from the N-terminus, the 504-residue chain is MDLLSALTLETWVLLAVILVLLYRLGTHRHGIFKKQGIPGPKPLPFLGTVLNYYKGLGRFDMECYKKYGKIWGLFDGQTPVFAIMDTEMIKNVLVKECFSVFTNRRDFGPVGIMGKAVSVAKDEEWKRYRALLSPTFTSGRLKEMFPIIEQYGDILVKYLKQEAETGKPVTMKKVFGAYSMDVITSTSFGVNVDSLNNPKDPFVEKTKKLLRFDFFDPLFLSVVLFPFLTPIYEMLNICMFPKDSIAFFQKFVHRIKETRLDSKHKHRVDFLQLMLNAHNNSKDEVSHKALSDVEIIAQSVIFIFAGYETTSSTLSFVLYFLATHPDIQKKLQEEIDGALPSKAPPTYDIVMEMEYLDMVLNETLRLYPIGNRLERVCKKDIELDGLFIPKGSVVTIPTYALHHDPQHWPKPEEFHPERFSKENKGSIDPYVYLPFGNGPRNCIGMRFALMNMKLALTKVLQNFSFQPCKETQIPLKLSRQAILEPEKPIVLKVLPRDAVINGA.

Cys-443 is a binding site for heme.

Belongs to the cytochrome P450 family. Requires heme as cofactor. Expressed in liver.

The protein localises to the endoplasmic reticulum membrane. Its subcellular location is the microsome membrane. It catalyses the reaction an organic molecule + reduced [NADPH--hemoprotein reductase] + O2 = an alcohol + oxidized [NADPH--hemoprotein reductase] + H2O + H(+). In terms of biological role, cytochromes P450 are a group of heme-thiolate monooxygenases. In liver microsomes, this enzyme is involved in an NADPH-dependent electron transport pathway. It oxidizes a variety of structurally unrelated compounds, including steroids, fatty acids, and xenobiotics. This chain is Cytochrome P450 3A2 (Cyp3a2), found in Rattus norvegicus (Rat).